A 288-amino-acid polypeptide reads, in one-letter code: Polyamine aminopropyltransferase (288 aa).

In terms of domain architecture, PABS spans 9–238 (ETLHDQFGQY…GIMTFAWATD (230 aa)). S-methyl-5'-thioadenosine is bound at residue Gln-33. Residues His-64 and Asp-88 each coordinate spermidine. Residues Glu-108 and 140 to 141 (DG) each bind S-methyl-5'-thioadenosine. Asp-158 functions as the Proton acceptor in the catalytic mechanism. 158-161 (DCTD) serves as a coordination point for spermidine. Pro-165 provides a ligand contact to S-methyl-5'-thioadenosine.

This sequence belongs to the spermidine/spermine synthase family. Homodimer or homotetramer.

It is found in the cytoplasm. The enzyme catalyses S-adenosyl 3-(methylsulfanyl)propylamine + putrescine = S-methyl-5'-thioadenosine + spermidine + H(+). Its pathway is amine and polyamine biosynthesis; spermidine biosynthesis; spermidine from putrescine: step 1/1. Catalyzes the irreversible transfer of a propylamine group from the amino donor S-adenosylmethioninamine (decarboxy-AdoMet) to putrescine (1,4-diaminobutane) to yield spermidine. The protein is Polyamine aminopropyltransferase of Escherichia coli O17:K52:H18 (strain UMN026 / ExPEC).